The sequence spans 286 residues: Small ribosomal subunit protein uS2 (286 aa).

The segment at 213–286 is disordered; that stretch reads EEQAQNNKWA…GAQEGGEWGS (74 aa). Positions 227 to 241 are enriched in low complexity; it reads SPALSAAVPSSAAPV. Residues 244–270 show a composition bias toward polar residues; that stretch reads WSSSPSKETTEWGASNTAAAAKSSWSN. Residues 274–286 are compositionally biased toward gly residues; it reads GEWGAQEGGEWGS.

Belongs to the universal ribosomal protein uS2 family. In terms of assembly, component of the small ribosomal subunit. Mature ribosomes consist of a small (40S) and a large (60S) subunit. The 40S subunit contains about 33 different proteins and 1 molecule of RNA (18S). The 60S subunit contains about 49 different proteins and 3 molecules of RNA (28S, 5.8S and 5S). Interacts with ribosomal protein S21.

Its subcellular location is the cytoplasm. Functionally, required for the assembly and/or stability of the 40S ribosomal subunit. Required for the processing of the 20S rRNA-precursor to mature 18S rRNA in a late step of the maturation of 40S ribosomal subunits. The chain is Small ribosomal subunit protein uS2 from Trichoplax adhaerens (Trichoplax reptans).